We begin with the raw amino-acid sequence, 234 residues long: 7-cyano-7-deazaguanine synthase (234 aa).

An ATP-binding site is contributed by 13-23 (FSGGIDSTTCL). Positions 197, 207, 210, and 213 each coordinate Zn(2+).

This sequence belongs to the QueC family. Zn(2+) serves as cofactor.

The catalysed reaction is 7-carboxy-7-deazaguanine + NH4(+) + ATP = 7-cyano-7-deazaguanine + ADP + phosphate + H2O + H(+). It functions in the pathway purine metabolism; 7-cyano-7-deazaguanine biosynthesis. Catalyzes the ATP-dependent conversion of 7-carboxy-7-deazaguanine (CDG) to 7-cyano-7-deazaguanine (preQ(0)). The polypeptide is 7-cyano-7-deazaguanine synthase (Syntrophobacter fumaroxidans (strain DSM 10017 / MPOB)).